Here is a 141-residue protein sequence, read N- to C-terminus: Large ribosomal subunit protein uL11 (141 aa).

It belongs to the universal ribosomal protein uL11 family. As to quaternary structure, part of the ribosomal stalk of the 50S ribosomal subunit. Interacts with L10 and the large rRNA to form the base of the stalk. L10 forms an elongated spine to which L12 dimers bind in a sequential fashion forming a multimeric L10(L12)X complex. In terms of processing, one or more lysine residues are methylated.

Forms part of the ribosomal stalk which helps the ribosome interact with GTP-bound translation factors. The chain is Large ribosomal subunit protein uL11 from Chlamydia pneumoniae (Chlamydophila pneumoniae).